The chain runs to 391 residues: Glycerol-3-phosphate dehydrogenase [NAD(+)] 1 (391 aa).

Residues 41–46 (GSGNWG), Phe-129, Lys-152, and Ala-185 contribute to the NAD(+) site. Lys-152 contacts substrate. Catalysis depends on Lys-245, which acts as the Proton acceptor. NAD(+) contacts are provided by Arg-310 and Gln-339. 310–311 (RN) lines the substrate pocket.

The protein belongs to the NAD-dependent glycerol-3-phosphate dehydrogenase family.

Its subcellular location is the cytoplasm. It carries out the reaction sn-glycerol 3-phosphate + NAD(+) = dihydroxyacetone phosphate + NADH + H(+). The polypeptide is Glycerol-3-phosphate dehydrogenase [NAD(+)] 1 (GPD1) (Saccharomyces uvarum (Yeast)).